A 153-amino-acid polypeptide reads, in one-letter code: 6,7-dimethyl-8-ribityllumazine synthase 1 (153 aa).

5-amino-6-(D-ribitylamino)uracil contacts are provided by residues Phe-16, 47–49 (ALE), and 76–78 (MVI). (2S)-2-hydroxy-3-oxobutyl phosphate is bound at residue 81 to 82 (ET). His-84 serves as the catalytic Proton donor. Asn-109 serves as a coordination point for 5-amino-6-(D-ribitylamino)uracil. Arg-123 serves as a coordination point for (2S)-2-hydroxy-3-oxobutyl phosphate.

It belongs to the DMRL synthase family.

It carries out the reaction (2S)-2-hydroxy-3-oxobutyl phosphate + 5-amino-6-(D-ribitylamino)uracil = 6,7-dimethyl-8-(1-D-ribityl)lumazine + phosphate + 2 H2O + H(+). It functions in the pathway cofactor biosynthesis; riboflavin biosynthesis; riboflavin from 2-hydroxy-3-oxobutyl phosphate and 5-amino-6-(D-ribitylamino)uracil: step 1/2. In terms of biological role, catalyzes the formation of 6,7-dimethyl-8-ribityllumazine by condensation of 5-amino-6-(D-ribitylamino)uracil with 3,4-dihydroxy-2-butanone 4-phosphate. This is the penultimate step in the biosynthesis of riboflavin. This Rhizobium meliloti (strain 1021) (Ensifer meliloti) protein is 6,7-dimethyl-8-ribityllumazine synthase 1.